A 287-amino-acid chain; its full sequence is Taxis protein CheF2 (287 aa).

As to quaternary structure, interacts with chemotaxis (Che) proteins as well as flagella accessory (Fla) proteins.

Involved in taxis signal transduction. In Halobacterium salinarum (strain ATCC 29341 / DSM 671 / R1), this protein is Taxis protein CheF2 (cheF2).